The sequence spans 313 residues: Porphobilinogen deaminase (313 aa).

S-(dipyrrolylmethanemethyl)cysteine is present on Cys242.

Belongs to the HMBS family. As to quaternary structure, monomer. The cofactor is dipyrromethane.

It catalyses the reaction 4 porphobilinogen + H2O = hydroxymethylbilane + 4 NH4(+). It functions in the pathway porphyrin-containing compound metabolism; protoporphyrin-IX biosynthesis; coproporphyrinogen-III from 5-aminolevulinate: step 2/4. Tetrapolymerization of the monopyrrole PBG into the hydroxymethylbilane pre-uroporphyrinogen in several discrete steps. In Escherichia coli O7:K1 (strain IAI39 / ExPEC), this protein is Porphobilinogen deaminase.